The sequence spans 427 residues: Chaperone SurA (427 aa).

Positions 1-13 are cleaved as a signal peptide; that stretch reads MLGVALLSGAVHA. PpiC domains follow at residues 164–265 and 275–374; these read SEEY…KLEE and RDEV…EVLG.

Its subcellular location is the periplasm. It carries out the reaction [protein]-peptidylproline (omega=180) = [protein]-peptidylproline (omega=0). Functionally, chaperone involved in the correct folding and assembly of outer membrane proteins. Recognizes specific patterns of aromatic residues and the orientation of their side chains, which are found more frequently in integral outer membrane proteins. May act in both early periplasmic and late outer membrane-associated steps of protein maturation. The protein is Chaperone SurA of Pseudomonas putida (strain ATCC 47054 / DSM 6125 / CFBP 8728 / NCIMB 11950 / KT2440).